Consider the following 124-residue polypeptide: Large ribosomal subunit protein bL12 (124 aa).

Belongs to the bacterial ribosomal protein bL12 family. As to quaternary structure, homodimer. Part of the ribosomal stalk of the 50S ribosomal subunit. Forms a multimeric L10(L12)X complex, where L10 forms an elongated spine to which 2 to 4 L12 dimers bind in a sequential fashion. Binds GTP-bound translation factors.

Its function is as follows. Forms part of the ribosomal stalk which helps the ribosome interact with GTP-bound translation factors. Is thus essential for accurate translation. The sequence is that of Large ribosomal subunit protein bL12 from Brucella anthropi (strain ATCC 49188 / DSM 6882 / CCUG 24695 / JCM 21032 / LMG 3331 / NBRC 15819 / NCTC 12168 / Alc 37) (Ochrobactrum anthropi).